Reading from the N-terminus, the 149-residue chain is FAD synthase (149 aa).

Residues 10–11 (TF), 15–18 (HPGH), Asp-95, and Tyr-123 contribute to the ATP site.

It belongs to the archaeal FAD synthase family. In terms of assembly, homodimer. The cofactor is Co(2+).

The catalysed reaction is FMN + ATP + H(+) = FAD + diphosphate. The protein operates within cofactor biosynthesis; FAD biosynthesis; FAD from FMN: step 1/1. Its activity is regulated as follows. Is inhibited by the product PPi. In terms of biological role, catalyzes the transfer of the AMP portion of ATP to flavin mononucleotide (FMN) to produce flavin adenine dinucleotide (FAD) coenzyme. To a lesser extent, is also able to utilize other nucleotides such as CTP and GTP as substrates, producing the modified coenzymes, flavin cytosine dinucleotide (FCD) and flavin guanine dinucleotide (FGD), respectively. Does not catalyze the reverse reaction to produce FMN and ATP from FAD and PPi. Does not function as a glycerol-3-phosphate cytidylyltransferase, as previously annotated in the complete genome. This chain is FAD synthase (ribL), found in Methanocaldococcus jannaschii (strain ATCC 43067 / DSM 2661 / JAL-1 / JCM 10045 / NBRC 100440) (Methanococcus jannaschii).